Reading from the N-terminus, the 449-residue chain is Tubulin beta chain (449 aa).

GTP-binding residues include Gln-11, Glu-71, Ser-140, Gly-144, Thr-145, Gly-146, Asn-206, and Asn-228. Glu-71 provides a ligand contact to Mg(2+).

The protein belongs to the tubulin family. As to quaternary structure, dimer of alpha and beta chains. A typical microtubule is a hollow water-filled tube with an outer diameter of 25 nm and an inner diameter of 15 nM. Alpha-beta heterodimers associate head-to-tail to form protofilaments running lengthwise along the microtubule wall with the beta-tubulin subunit facing the microtubule plus end conferring a structural polarity. Microtubules usually have 13 protofilaments but different protofilament numbers can be found in some organisms and specialized cells. It depends on Mg(2+) as a cofactor.

It is found in the cytoplasm. The protein resides in the cytoskeleton. Tubulin is the major constituent of microtubules, a cylinder consisting of laterally associated linear protofilaments composed of alpha- and beta-tubulin heterodimers. Microtubules grow by the addition of GTP-tubulin dimers to the microtubule end, where a stabilizing cap forms. Below the cap, tubulin dimers are in GDP-bound state, owing to GTPase activity of alpha-tubulin. The polypeptide is Tubulin beta chain (TUBB) (Cicer arietinum (Chickpea)).